The following is a 445-amino-acid chain: Exodeoxyribonuclease 7 large subunit (445 aa).

This sequence belongs to the XseA family. Heterooligomer composed of large and small subunits.

It localises to the cytoplasm. The enzyme catalyses Exonucleolytic cleavage in either 5'- to 3'- or 3'- to 5'-direction to yield nucleoside 5'-phosphates.. Functionally, bidirectionally degrades single-stranded DNA into large acid-insoluble oligonucleotides, which are then degraded further into small acid-soluble oligonucleotides. The polypeptide is Exodeoxyribonuclease 7 large subunit (Staphylococcus epidermidis (strain ATCC 35984 / DSM 28319 / BCRC 17069 / CCUG 31568 / BM 3577 / RP62A)).